Consider the following 1117-residue polypeptide: Leucine-rich repeats and immunoglobulin-like domains protein 3 (1117 aa).

The first 24 residues, 1–24, serve as a signal peptide directing secretion; it reads MGAPGLRAATAALGLLLCAGLGRA. The region spanning 38–74 is the LRRNT domain; the sequence is LLDDDAQRPCPAACHCLGDLLDCSRRRLVRLPDPLPA. 15 LRR repeats span residues 75–98, 99–120, 122–143, 146–168, 169–189, 193–214, 216–237, 240–261, 264–285, 288–309, 312–333, 336–357, 360–382, 387–408, and 411–432; these read WVTRLDLSHNRLSFIQTSSLSHLQ, SLQEVKLNNNELETIPNLGSIS, NIRQLSLAGNAIDKILPEQLEA, SLETLDLSNNNISELRTAFPPLQ, LKYLYINNNRVSSMEPGYFDN, TLLVLKLNRNRISAIPPKMFKL, QLQHLELNRNKIKNVDGLTFQG, ALKSLKMQRNGVTKLMDGAFWG, NMEVLQLDHNNLTEITKGWLYG, MLRELHLSQNAINRISPDAWEF, KLSELDLTFNHLSRLDDSSFLG, LLNALHIGNNKVSYIADCAFRG, SLKTLDLRNNEISWTIEDMSGAF, RLRQLILQGNRIRSITKKAFAG, and TLEHLDLSGNAIMSLQSNAFSQ. A glycan (N-linked (GlcNAc...) asparagine) is linked at Asn156. N-linked (GlcNAc...) asparagine glycosylation is present at Asn274. N-linked (GlcNAc...) asparagine glycosylation is found at Asn442 and Asn469. In terms of domain architecture, LRRCT spans 444–495; it reads SSLLCDCQLRWLPQWVAENNFQSFVNASCAHPQLLKGRSIFTVSPDGFVCDD. 3 Ig-like C2-type domains span residues 499–598, 603–692, and 697–783; these read PQIT…AKLT, PSFT…ATLT, and PSFL…VRLS. Intrachain disulfides connect Cys520/Cys581 and Cys624/Cys676. N-linked (GlcNAc...) asparagine glycosylation is found at Asn688 and Asn729. Cys718 and Cys767 are disulfide-bonded. A helical transmembrane segment spans residues 810 to 830; it reads VVIIAVVCCVVGTSLVWVVII. The N-linked (GlcNAc...) asparagine glycan is linked to Asn1014. The segment at 1019-1093 is disordered; that stretch reads DFSTGPEPGS…KERTDFREEN (75 aa). The span at 1083–1093 shows a compositional bias: basic and acidic residues; sequence DKERTDFREEN.

Interacts with EGFR, ERBB2 and ERBB4 (in vitro). In terms of tissue distribution, widely expressed.

The protein resides in the cell membrane. It is found in the cytoplasmic vesicle membrane. Plays a role in craniofacial and inner ear morphogenesis during embryonic development. Acts within the otic vesicle epithelium to control formation of the lateral semicircular canal in the inner ear, possibly by restricting the expression of NTN1. This chain is Leucine-rich repeats and immunoglobulin-like domains protein 3 (Lrig3), found in Mus musculus (Mouse).